A 357-amino-acid chain; its full sequence is Dihydroorotate dehydrogenase (quinone) (357 aa).

Residues 65–69 and T89 contribute to the FMN site; that span reads AGLDK. Residue K69 coordinates substrate. 114 to 118 lines the substrate pocket; sequence NRFGF. Residues N156 and N189 each coordinate FMN. Position 189 (N189) interacts with substrate. S192 acts as the Nucleophile in catalysis. N194 contacts substrate. K234 and T262 together coordinate FMN. 263–264 contacts substrate; that stretch reads NT. Residues G285, G314, and 335–336 each bind FMN; that span reads YT.

The protein belongs to the dihydroorotate dehydrogenase family. Type 2 subfamily. Monomer. FMN is required as a cofactor.

It is found in the cell membrane. The catalysed reaction is (S)-dihydroorotate + a quinone = orotate + a quinol. Its pathway is pyrimidine metabolism; UMP biosynthesis via de novo pathway; orotate from (S)-dihydroorotate (quinone route): step 1/1. In terms of biological role, catalyzes the conversion of dihydroorotate to orotate with quinone as electron acceptor. This chain is Dihydroorotate dehydrogenase (quinone), found in Albidiferax ferrireducens (strain ATCC BAA-621 / DSM 15236 / T118) (Rhodoferax ferrireducens).